Here is a 95-residue protein sequence, read N- to C-terminus: Neurexophilin-3 (95 aa).

2 N-linked (GlcNAc...) asparagine glycosylation sites follow: Asn-1 and Asn-7. The segment at 1-21 (NATGQGNISISLVPPSKAVEX) is III. The IV (linker domain) stretch occupies residues 22 to 30 (HQXQQIFIE). The tract at residues 31 to 95 (AKASKIFNCR…YIAFYSTDYR (65 aa)) is v (Cys-rich).

The protein belongs to the neurexophilin family.

Its subcellular location is the secreted. Its function is as follows. May be signaling molecules that resemble neuropeptides. Ligand for alpha-neurexins. This chain is Neurexophilin-3 (NXPH3), found in Macaca mulatta (Rhesus macaque).